The following is a 383-amino-acid chain: Smad nuclear-interacting protein 1 (383 aa).

Residues Met-1–Arg-10 are compositionally biased toward basic and acidic residues. The disordered stretch occupies residues Met-1 to Glu-209. Phosphoserine is present on Ser-18. Residue Lys-28 forms a Glycyl lysine isopeptide (Lys-Gly) (interchain with G-Cter in SUMO); alternate linkage. Residue Lys-28 forms a Glycyl lysine isopeptide (Lys-Gly) (interchain with G-Cter in SUMO1); alternate linkage. Lys-28 participates in a covalent cross-link: Glycyl lysine isopeptide (Lys-Gly) (interchain with G-Cter in SUMO2); alternate. Basic and acidic residues predominate over residues Lys-28–Asp-43. A phosphoserine mark is found at Ser-33, Ser-48, and Ser-50. A compositionally biased stretch (low complexity) spans Ala-44 to Pro-56. Residues Ser-59–Gln-90 show a composition bias toward basic residues. Ser-91 bears the Phosphoserine mark. Composition is skewed to basic and acidic residues over residues Val-99 to Arg-134 and Arg-143 to Ser-159. Lys-100 participates in a covalent cross-link: Glycyl lysine isopeptide (Lys-Gly) (interchain with G-Cter in SUMO2). At Ser-145 the chain carries Phosphoserine. The stretch at Gln-153–Ile-194 forms a coiled coil. Lys-210 participates in a covalent cross-link: Glycyl lysine isopeptide (Lys-Gly) (interchain with G-Cter in SUMO2). Residues Tyr-268 to Ile-331 enclose the FHA domain. The segment covering Glu-359–Lys-369 has biased composition (basic and acidic residues). A disordered region spans residues Glu-359–Ser-383. Residues Glu-370–Ser-383 are compositionally biased toward acidic residues. Ser-381 is modified (phosphoserine).

In terms of assembly, component of activated spliceosome complexes. Binds SMAD4 and CREBBP/EP300. Component of the minor spliceosome, which splices U12-type introns. Binds the SMAD1/OAZ1/PSMB4 complex. Interacts with DROSHA and SMARCA4. Component of the SNARP complex which consists at least of SNIP1, SNW1, THRAP3, BCLAF1 and PNN. Post-translationally, degraded by the proteasome upon binding to the SMAD1/OAZ1/PSMB4 complex.

Its subcellular location is the nucleus. Functionally, required for pre-mRNA splicing as component of the spliceosome. As a component of the minor spliceosome, involved in the splicing of U12-type introns in pre-mRNAs. Down-regulates NF-kappa-B signaling by competing with RELA for CREBBP/EP300 binding. Involved in the microRNA (miRNA) biogenesis. May be involved in cyclin-D1/CCND1 mRNA stability through the SNARP complex which associates with both the 3'end of the CCND1 gene and its mRNA. This chain is Smad nuclear-interacting protein 1 (Snip1), found in Mus musculus (Mouse).